We begin with the raw amino-acid sequence, 130 residues long: Large ribosomal subunit protein bL19 (130 aa).

This sequence belongs to the bacterial ribosomal protein bL19 family.

This protein is located at the 30S-50S ribosomal subunit interface and may play a role in the structure and function of the aminoacyl-tRNA binding site. The sequence is that of Large ribosomal subunit protein bL19 from Burkholderia vietnamiensis (strain G4 / LMG 22486) (Burkholderia cepacia (strain R1808)).